Consider the following 662-residue polypeptide: ABC transporter G family member 25 (662 aa).

The segment at 1–30 is disordered; it reads MSAFDGVENQMNGPDSSPRLSQDPREPRSL. Over residues 9 to 20 the composition is skewed to polar residues; the sequence is NQMNGPDSSPRL. N-linked (GlcNAc...) asparagine glycosylation is present at N56. One can recognise an ABC transporter domain in the interval 69-308; sequence QKPSDETRST…FESVGFSPAF (240 aa). Residue 101-108 coordinates ATP; sequence GPSGSGKS. An N-linked (GlcNAc...) asparagine glycan is attached at N122. The next 7 helical transmembrane spans lie at 374–394, 406–426, 437–457, 489–509, 522–542, 547–567, and 629–649; these read VNGGGITTCIATWFSQLCILL, FDLLRIFQVVAASILCGLMWW, LGLLFFISIFWGVLPSFNAVF, LSMELVLPASFLTFTYWMVYL, VLLLYVLASQGLGLALGAAIM, ASTIVTVTMLAFVLTGGYYVN, and VIGDVGMWTSVGVLFLMFFGY. The 207-residue stretch at 388–594 folds into the ABC transmembrane type-2 domain; the sequence is SQLCILLHRL…CYRLLVAIQY (207 aa).

Belongs to the ABC transporter superfamily. ABCG family. Eye pigment precursor importer (TC 3.A.1.204) subfamily. Mainly expressed in vascular tissues,predominantly in phloem companion cells, with highest levels in roots and seeds, and lower levels in seedlings, stems, leaves and flowers. Mostly observed in inflorescence meristems relative to cauline leaves and developing siliques. In seeds, mainly expressed in the endosperm and, to a lesser extent, in the embryo.

Its subcellular location is the cell membrane. The enzyme catalyses abscisate(in) + ATP + H2O = abscisate(out) + ADP + phosphate + H(+). Its activity is regulated as follows. ADP and vanadate (ABC transporters inhibitor) inhibit the ATP-dependent abscisic acid (ABA) uptake. In terms of biological role, high affinity abscisic acid (ABA) transporter that mediates the export of ABA, with a preference for (+)-ABA, through the plasma membrane, especially in vascular tissues (e.g. phloem companion cells), and is involved in the intercellular ABA signaling pathway. Together with ABCG31, export ABA from the endosperm to deliver it to the embryo via ABCG30 and ABCG40-mediated import to suppress radicle extension and subsequent embryonic growth. In Arabidopsis thaliana (Mouse-ear cress), this protein is ABC transporter G family member 25.